Consider the following 203-residue polypeptide: V-type ATP synthase subunit D (203 aa).

Belongs to the V-ATPase D subunit family.

Functionally, produces ATP from ADP in the presence of a proton gradient across the membrane. In Chlamydia muridarum (strain MoPn / Nigg), this protein is V-type ATP synthase subunit D (atpD).